Here is a 1513-residue protein sequence, read N- to C-terminus: DNA-directed RNA polymerase subunit beta'' (1513 aa).

Residues Cys220, Cys296, Cys303, and Cys306 each contribute to the Zn(2+) site. Residues 644-769 form a disordered region; it reads RTREKDSENE…EYGNPEEDSV (126 aa). A compositionally biased stretch (basic and acidic residues) spans 659–679; that stretch reads NEYRTREEECKTLEDEYRTRE. Positions 680-707 are enriched in acidic residues; that stretch reads EEYETLEDEYGIPENEYETLEDEYGILE. A compositionally biased stretch (basic and acidic residues) spans 726-737; it reads NKYRPREDKYGT. The span at 738-767 shows a compositional bias: acidic residues; the sequence is LEEDSEDEHGTLEEDSEEDSEDEYGNPEED.

It belongs to the RNA polymerase beta' chain family. RpoC2 subfamily. As to quaternary structure, in plastids the minimal PEP RNA polymerase catalytic core is composed of four subunits: alpha, beta, beta', and beta''. When a (nuclear-encoded) sigma factor is associated with the core the holoenzyme is formed, which can initiate transcription. Requires Zn(2+) as cofactor.

Its subcellular location is the plastid. The protein resides in the chloroplast. The catalysed reaction is RNA(n) + a ribonucleoside 5'-triphosphate = RNA(n+1) + diphosphate. DNA-dependent RNA polymerase catalyzes the transcription of DNA into RNA using the four ribonucleoside triphosphates as substrates. The polypeptide is DNA-directed RNA polymerase subunit beta'' (Oryza nivara (Indian wild rice)).